We begin with the raw amino-acid sequence, 477 residues long: Succinate-semialdehyde dehydrogenase [NADP(+)] (477 aa).

Residues 142–143, 166–169, and 218–219 contribute to the NADP(+) site; these read WN, KHSE, and GS. Glu-240 serves as the catalytic Proton acceptor. Leu-241 contacts NADP(+). Cys-274 functions as the Nucleophile in the catalytic mechanism. Glu-371 provides a ligand contact to NADP(+).

This sequence belongs to the aldehyde dehydrogenase family.

It carries out the reaction succinate semialdehyde + NADP(+) + H2O = succinate + NADPH + 2 H(+). The protein operates within amino-acid degradation; 4-aminobutanoate degradation. Functionally, catalyzes the NADP(+) dependent oxidation of succinate semialdehyde to succinate. The polypeptide is Succinate-semialdehyde dehydrogenase [NADP(+)] (ssdA) (Deinococcus radiodurans (strain ATCC 13939 / DSM 20539 / JCM 16871 / CCUG 27074 / LMG 4051 / NBRC 15346 / NCIMB 9279 / VKM B-1422 / R1)).